Consider the following 638-residue polypeptide: Poly(A)-specific ribonuclease PARN (638 aa).

Residues D28 and E30 each coordinate a divalent metal cation. The tract at residues 143–165 is disordered; that stretch reads REQYDEKRSQSNGAGALSYTSPN. Positions 152–165 are enriched in polar residues; sequence QSNGAGALSYTSPN. Phosphoserine occurs at positions 163 and 167. Residues 178–245 enclose the R3H domain; it reads KKFIDQVVEK…ERYIVISKVD (68 aa). Position 220 is an N6-acetyllysine (K220). A divalent metal cation is bound by residues D292 and D382. The residue at position 499 (K499) is an N6-acetyllysine. S530 is modified (phosphoserine). S557 is subject to Phosphoserine; by MAPKAPK2. Residues 573 to 638 are disordered; it reads RAEAGLEARA…AKLFEVPDTW (66 aa). A phosphoserine mark is found at S583 and S587. Positions 606-615 are enriched in basic residues; it reads KKAKKLKRMK. S619, S623, and S627 each carry phosphoserine.

This sequence belongs to the CAF1 family. As to quaternary structure, homodimer. Found in a mRNA decay complex with RENT1, RENT2 and RENT3B. Interacts with KHSRP. Interacts with CELF1/CUGBP1. Interacts with ZC3HAV1 in an RNA-independent manner. Interacts with DHX36. Mg(2+) is required as a cofactor. In terms of processing, phosphorylation by MAPKAPK2, preventing GADD45A mRNA degradation after genotoxic stress.

Its subcellular location is the nucleus. It localises to the cytoplasm. The protein localises to the nucleolus. The enzyme catalyses Exonucleolytic cleavage of poly(A) to 5'-AMP.. 3'-exoribonuclease that has a preference for poly(A) tails of mRNAs, thereby efficiently degrading poly(A) tails. Exonucleolytic degradation of the poly(A) tail is often the first step in the decay of eukaryotic mRNAs and is also used to silence certain maternal mRNAs translationally during oocyte maturation and early embryonic development. Involved in nonsense-mediated mRNA decay, a critical process of selective degradation of mRNAs that contain premature stop codons. Also involved in degradation of inherently unstable mRNAs that contain AU-rich elements (AREs) in their 3'-UTR, possibly via its interaction with KHSRP. Probably mediates the removal of poly(A) tails of AREs mRNAs, which constitutes the first step of destabilization. Interacts with both the 3'-end poly(A) tail and the 5'-end cap structure during degradation, the interaction with the cap structure being required for an efficient degradation of poly(A) tails. Also able to recognize poly(A) tails of microRNAs such as MIR21 and H/ACA box snoRNAs (small nucleolar RNAs) leading to microRNAs degradation or snoRNA increased stability. The polypeptide is Poly(A)-specific ribonuclease PARN (PARN) (Bos taurus (Bovine)).